The primary structure comprises 316 residues: Transaldolase (316 aa).

Lys125 functions as the Schiff-base intermediate with substrate in the catalytic mechanism.

It belongs to the transaldolase family. Type 1 subfamily. In terms of assembly, homodimer.

The protein localises to the cytoplasm. It carries out the reaction D-sedoheptulose 7-phosphate + D-glyceraldehyde 3-phosphate = D-erythrose 4-phosphate + beta-D-fructose 6-phosphate. Its pathway is carbohydrate degradation; pentose phosphate pathway; D-glyceraldehyde 3-phosphate and beta-D-fructose 6-phosphate from D-ribose 5-phosphate and D-xylulose 5-phosphate (non-oxidative stage): step 2/3. Transaldolase is important for the balance of metabolites in the pentose-phosphate pathway. The chain is Transaldolase from Verminephrobacter eiseniae (strain EF01-2).